The sequence spans 459 residues: NADH-ubiquinone oxidoreductase chain 4 (459 aa).

Helical transmembrane passes span 20-42 (PKWLWSATTTHSLIIASLSLTLF), 61-81 (MISTPLIILTCWLLPLMIIAS), 103-123 (LQALLIMAFSATEIILFYIMF), 148-168 (IYFLFYTLAGSLPLLVALLYL), 194-214 (FLWVACVTAFLVKMPLYGVHL), 224-244 (PVAGSMILAAILLKLGGYGMI), 257-277 (LAYPFIILALWGIIMTGSICM), 284-303 (SLIAYSSVSHMGLVASGILI), 307-329 (WGFTGAIILMIAHGLTSSALFCL), 350-370 (IILPLMATWWFIMSLANMALP), 392-414 (TILLTGTGTLITASYSLYLYMSS), and 435-455 (LLLTLHIIPIILLMIKPELIW).

This sequence belongs to the complex I subunit 4 family.

It localises to the mitochondrion membrane. It carries out the reaction a ubiquinone + NADH + 5 H(+)(in) = a ubiquinol + NAD(+) + 4 H(+)(out). Its function is as follows. Core subunit of the mitochondrial membrane respiratory chain NADH dehydrogenase (Complex I) that is believed to belong to the minimal assembly required for catalysis. Complex I functions in the transfer of electrons from NADH to the respiratory chain. The immediate electron acceptor for the enzyme is believed to be ubiquinone. This is NADH-ubiquinone oxidoreductase chain 4 (MT-ND4) from Polypterus ornatipinnis (Ornate bichir).